The sequence spans 232 residues: F420-dependent NADP reductase (232 aa).

Residues 15–18 (TGDQ), 37–38 (SR), Lys-42, Val-80, Val-106, and Ala-151 each bind NADP(+).

Belongs to the F420-dependent NADP reductase family. Homotetramer.

It catalyses the reaction reduced coenzyme F420-(gamma-L-Glu)(n) + NADP(+) = oxidized coenzyme F420-(gamma-L-Glu)(n) + NADPH + 2 H(+). Its function is as follows. Catalyzes the reduction of NADP(+) with F420H(2) via hydride transfer, and likely the reverse reaction, i.e. the reduction of F420 with NADPH. Probably functions in the regeneration of NADPH required in biosynthetic reactions. Is specific for reduced F420 as electron donor for the reduction of NADP; neither reduced FAD nor FMN can act as electron donor. The enzyme is also specific for NADP; NAD is not utilized as substrate. The protein is F420-dependent NADP reductase (fno) of Methanothermobacter thermautotrophicus (strain ATCC 29096 / DSM 1053 / JCM 10044 / NBRC 100330 / Delta H) (Methanobacterium thermoautotrophicum).